A 23-amino-acid chain; its full sequence is NADP-dependent malic enzyme (23 aa).

It belongs to the malic enzymes family. In terms of assembly, homotetramer.

The catalysed reaction is (S)-malate + NADP(+) = pyruvate + CO2 + NADPH. The enzyme catalyses oxaloacetate + H(+) = pyruvate + CO2. The chain is NADP-dependent malic enzyme from Populus euphratica (Euphrates poplar).